Consider the following 387-residue polypeptide: Exodeoxyribonuclease 7 large subunit (387 aa).

Belongs to the XseA family. In terms of assembly, heterooligomer composed of large and small subunits.

It localises to the cytoplasm. The catalysed reaction is Exonucleolytic cleavage in either 5'- to 3'- or 3'- to 5'-direction to yield nucleoside 5'-phosphates.. Bidirectionally degrades single-stranded DNA into large acid-insoluble oligonucleotides, which are then degraded further into small acid-soluble oligonucleotides. The sequence is that of Exodeoxyribonuclease 7 large subunit from Synechococcus sp. (strain CC9902).